We begin with the raw amino-acid sequence, 361 residues long: G-protein coupled receptor 52 (361 aa).

Topologically, residues 1-44 are extracellular; that stretch reads MNESRWTEWRILNMSSSIVNVSEHHSCPLGFGHYSVEDVCIFET. Asparagine 2, asparagine 13, and asparagine 20 each carry an N-linked (GlcNAc...) asparagine glycan. Residues 45 to 65 traverse the membrane as a helical segment; sequence VVIVLLTFLIISGNLTVIFVF. At 66-81 the chain is on the cytoplasmic side; sequence HCAPLLHHYTTSYFIQ. Residues 82 to 102 traverse the membrane as a helical segment; it reads TMAYADLLVGVTCLVPTLSLL. Topologically, residues 103–115 are extracellular; sequence HYSTGVHESLTCQ. A disulfide bridge connects residues cysteine 114 and cysteine 193. The chain crosses the membrane as a helical span at residues 116–136; that stretch reads VFGYIISVLKSVSMACLACIS. Residues 137–159 lie on the Cytoplasmic side of the membrane; that stretch reads VDRYLAITKPLSYNQLVTPCRLR. Residues 160–180 traverse the membrane as a helical segment; that stretch reads ICIIMIWIYSCLIFLPSFFGW. The Extracellular portion of the chain corresponds to 181–205; sequence GKPGYHGDIFEWCATSWLTSAYFTC. The helical transmembrane segment at 206–226 threads the bilayer; sequence FIVCLLYAPAALVVCFTYFHI. Over 227–265 the chain is Cytoplasmic; it reads FKICRQHTKEINDRRARFPSHEVEASREAGHSPDRRYAM. A helical transmembrane segment spans residues 266-286; it reads VLFRITSVFYMLWLPYIIYFL. Residues 287–296 are Extracellular-facing; sequence LESSRVLDNP. Residues 297-317 traverse the membrane as a helical segment; that stretch reads TLSFLTTWLAISNSFCNCVIY. Residues 318 to 361 lie on the Cytoplasmic side of the membrane; it reads SLSNSVFRLGLRRLSETMCTSCVCAKDQEAQDPKPRRRANSCSI.

It belongs to the G-protein coupled receptor 1 family. In terms of tissue distribution, expressed in brain, especially in striatum. Expressed in the striatum, nucleus accumbens, and lateral globus pallidus.

It is found in the cell membrane. Its function is as follows. G- protein coupled receptor activated by antipsychotics reserpine leading to an increase in intracellular cAMP and its internalization. May play a role in locomotor activity through modulation of dopamine, NMDA and ADORA2A-induced locomotor activity. These behavioral changes are accompanied by modulation of the dopamine receptor signaling pathway in striatum. Modulates HTT level via cAMP-dependent but PKA independent mechanisms throught activation of RAB39B that translocates HTT to the endoplasmic reticulum, thus avoiding proteasome degradation. This is G-protein coupled receptor 52 from Mus musculus (Mouse).